A 513-amino-acid chain; its full sequence is GMP synthase [glutamine-hydrolyzing] (513 aa).

Positions 5 to 195 (LVLVIDFGGQ…VYNICGCTGD (191 aa)) constitute a Glutamine amidotransferase type-1 domain. Cys82 serves as the catalytic Nucleophile. Catalysis depends on residues His169 and Glu171. Positions 196–388 (WKMDSFVEKT…LGIPEKLVFR (193 aa)) constitute a GMPS ATP-PPase domain. Residue 223–229 (SGGVDSS) participates in ATP binding.

As to quaternary structure, homodimer.

It carries out the reaction XMP + L-glutamine + ATP + H2O = GMP + L-glutamate + AMP + diphosphate + 2 H(+). It functions in the pathway purine metabolism; GMP biosynthesis; GMP from XMP (L-Gln route): step 1/1. Catalyzes the synthesis of GMP from XMP. This chain is GMP synthase [glutamine-hydrolyzing], found in Clostridium botulinum (strain Eklund 17B / Type B).